The sequence spans 273 residues: Urease accessory protein UreD (273 aa).

The protein belongs to the UreD family. As to quaternary structure, ureD, UreF and UreG form a complex that acts as a GTP-hydrolysis-dependent molecular chaperone, activating the urease apoprotein by helping to assemble the nickel containing metallocenter of UreC. The UreE protein probably delivers the nickel.

Its subcellular location is the cytoplasm. Required for maturation of urease via the functional incorporation of the urease nickel metallocenter. In Rhizobium leguminosarum bv. trifolii (strain WSM2304), this protein is Urease accessory protein UreD.